Consider the following 491-residue polypeptide: Chromosomal replication initiator protein DnaA (491 aa).

The segment at 1-69 (MTTWDKCLKK…TIQECHGNDL (69 aa)) is domain I, interacts with DnaA modulators. The tract at residues 69-154 (LIIEYSNKKF…KEDEEYSFGL (86 aa)) is domain II. The domain III, AAA+ region stretch occupies residues 155–371 (PLKEKYVFDS…GALNRVLTTS (217 aa)). Positions 199, 201, 202, and 203 each coordinate ATP. Residues 372–491 (KFNHKDPTIE…YELLLNKISR (120 aa)) form a domain IV, binds dsDNA region.

This sequence belongs to the DnaA family. Oligomerizes as a right-handed, spiral filament on DNA at oriC.

Its subcellular location is the cytoplasm. Functionally, plays an essential role in the initiation and regulation of chromosomal replication. ATP-DnaA binds to the origin of replication (oriC) to initiate formation of the DNA replication initiation complex once per cell cycle. Binds the DnaA box (a 9 base pair repeat at the origin) and separates the double-stranded (ds)DNA. Forms a right-handed helical filament on oriC DNA; dsDNA binds to the exterior of the filament while single-stranded (ss)DNA is stabiized in the filament's interior. The ATP-DnaA-oriC complex binds and stabilizes one strand of the AT-rich DNA unwinding element (DUE), permitting loading of DNA polymerase. After initiation quickly degrades to an ADP-DnaA complex that is not apt for DNA replication. Binds acidic phospholipids. The chain is Chromosomal replication initiator protein DnaA from Francisella tularensis subsp. tularensis (strain WY96-3418).